We begin with the raw amino-acid sequence, 1137 residues long: UDP-N-acetylglucosamine transferase subunit ALG13 (1137 aa).

The segment at 1 to 125 (MKCVFVTVGT…LHKEGHLFYC (125 aa)) is glycosyltransferase activity. The tract at residues 126–400 (TCRVLTCPGQ…GSKKNRNNAV (275 aa)) is deubiquitinase activity. An OTU domain is found at 231 to 352 (LFRKLTAKDA…SGHYDSVYSK (122 aa)). Asp239 acts as the For deubiquitinase activity in catalysis. The Nucleophile; for deubiquitinase activity role is filled by Cys242. His345 (for deubiquitinase activity) is an active-site residue. A Tudor domain is found at 492–552 (QYYLGDKCQV…KPVTQVMSVP (61 aa)). 2 disordered regions span residues 641–660 (HFHP…MPRN) and 911–974 (IPHA…SGSD). Pro residues-rich tracts occupy residues 918–946 (LPPP…PPPA) and 956–967 (QPPPPLPPPPYS).

The protein belongs to the glycosyltransferase 28 family. As to quaternary structure, forms with ALG14 the active heterodimeric UDP-N-acetylglucosamine transferase complex. Not able to interact with ALG14 to form an active UDP-N-acetylglucosamine transferase complex.

The protein localises to the endoplasmic reticulum membrane. The enzyme catalyses an N-acetyl-alpha-D-glucosaminyl-diphospho-di-trans,poly-cis-dolichol + UDP-N-acetyl-alpha-D-glucosamine = an N,N'-diacetylchitobiosyl-diphospho-di-trans,poly-cis-dolichol + UDP + H(+). It participates in protein modification; protein glycosylation. In terms of biological role, catalytic subunit of the UDP-N-acetylglucosamine transferase complex that operates in the biosynthetic pathway of dolichol-linked oligosaccharides, the glycan precursors employed in protein asparagine (N)-glycosylation. The assembly of dolichol-linked oligosaccharides begins on the cytosolic side of the endoplasmic reticulum membrane and finishes in its lumen. The sequential addition of sugars to dolichol pyrophosphate produces dolichol-linked oligosaccharides containing fourteen sugars, including two GlcNAcs, nine mannoses and three glucoses. Once assembled, the oligosaccharide is transferred from the lipid to nascent proteins by oligosaccharyltransferases. On the cytoplasmic face of the endoplasmic reticulum, the dimeric ALG13/ALG14 complex catalyzes the second step of dolichol pyrophosphate biosynthesis, transferring a beta1,4-linked N-acetylglucosamine (GlcNAc) from UDP-GlcNAc to GlcNAc-pyrophosphatedolichol (Gn-PDol) to produce N,N'-diacetylchitobiosyl diphosphodolichol. N,N'-diacetylchitobiosyl diphosphodolichol is a substrate for ALG1, the following enzyme in the biosynthetic pathway. Functionally, no glycosyltransferase or deubiquitinase activity is detected for this potential multifunctional enzyme. This Homo sapiens (Human) protein is UDP-N-acetylglucosamine transferase subunit ALG13.